The chain runs to 321 residues: uncharacterized protein (321 aa).

The Proton donor role is filled by Tyr49. Residue His106 participates in substrate binding.

This sequence belongs to the aldo/keto reductase family.

This is an uncharacterized protein from Caenorhabditis elegans.